Here is a 175-residue protein sequence, read N- to C-terminus: NADH-ubiquinone oxidoreductase chain 6 (175 aa).

Helical transmembrane passes span M1–S21, S25–M45, F47–V67, V88–L108, and Y149–L169.

This sequence belongs to the complex I subunit 6 family.

The protein resides in the mitochondrion membrane. The catalysed reaction is a ubiquinone + NADH + 5 H(+)(in) = a ubiquinol + NAD(+) + 4 H(+)(out). Core subunit of the mitochondrial membrane respiratory chain NADH dehydrogenase (Complex I) that is believed to belong to the minimal assembly required for catalysis. Complex I functions in the transfer of electrons from NADH to the respiratory chain. The immediate electron acceptor for the enzyme is believed to be ubiquinone. In Rhinolophus monoceros (Formosan lesser horseshoe bat), this protein is NADH-ubiquinone oxidoreductase chain 6 (MT-ND6).